The sequence spans 88 residues: Beta-insect excitatory toxin LqhIT1b (88 aa).

The signal sequence occupies residues 1–18 (MKFFLLFLVVLPIMGVLG). The region spanning 20–83 (KNGYAVDSKG…ISDTTKKYCD (64 aa)) is the LCN-type CS-alpha/beta domain. Cystine bridges form between Cys34–Cys55, Cys40–Cys60, Cys44–Cys62, and Cys56–Cys82.

Belongs to the long (4 C-C) scorpion toxin superfamily. Sodium channel inhibitor family. Beta subfamily. As to expression, expressed by the venom gland.

It localises to the secreted. Its function is as follows. Excitatory insect toxins induce a spastic paralysis. They bind voltage-independently at site-4 of sodium channels (Nav) and shift the voltage of activation toward more negative potentials thereby affecting sodium channel activation and promoting spontaneous and repetitive firing. This Leiurus hebraeus (Hebrew deathstalker scorpion) protein is Beta-insect excitatory toxin LqhIT1b.